The primary structure comprises 569 residues: Pyruvate decarboxylase (569 aa).

The pyruvate site is built by Asp38 and His124. Residues Thr398 and 421–423 contribute to the thiamine diphosphate site; that span reads GSI. Residue Asp451 participates in Mg(2+) binding. Residues 452–453 and 478–483 contribute to the thiamine diphosphate site; these read GS and NEGYTI. Mg(2+) contacts are provided by Asn478 and Gly480. A pyruvate-binding site is contributed by Glu484.

It belongs to the TPP enzyme family. In terms of assembly, homotetramer. Mg(2+) serves as cofactor. Thiamine diphosphate is required as a cofactor.

The enzyme catalyses a 2-oxocarboxylate + H(+) = an aldehyde + CO2. It catalyses the reaction pyruvate + H(+) = acetaldehyde + CO2. The chain is Pyruvate decarboxylase (pdcA) from Aspergillus fumigatus (strain ATCC MYA-4609 / CBS 101355 / FGSC A1100 / Af293) (Neosartorya fumigata).